The primary structure comprises 533 residues: E3 ubiquitin-protein ligase arih1l (533 aa).

Disordered regions lie at residues 1-35 and 48-73; these read MDSD…EAVD and PAVA…QEDE. A TRIAD supradomain region spans residues 158-369; it reads QDLPCQICYL…SAWYNCNRYN (212 aa). Residues Cys162, Cys165, Cys179, His181, Cys184, Cys187, Cys207, Cys212, Cys252, Cys257, Cys273, Cys275, Cys280, Cys283, His288, Cys293, Cys320, and Cys323 each coordinate Zn(2+). Residues 162–212 form an RING-type 1 zinc finger; sequence CQICYLNYPNSYFTGLECGHKFCMQCWGDYLTTKIIEEGMGQTISCPAHNC. The IBR-type zinc finger occupies 232–293; it reads LKYQHLITNS…GENWHDPVKC (62 aa). Residues 320–351 form an RING-type 2; atypical zinc finger; the sequence is CPKCHVTIEKDGGCNHMVCRNQNCKAEFCWVC. Residue Cys333 is part of the active site. Residues Cys338, Cys343, Cys348, Cys351, His358, and Cys365 each contribute to the Zn(2+) site. The stretch at 409–425 forms a coiled coil; it reads KLYAQVKQKMEEMQQHN.

Belongs to the RBR family. Ariadne subfamily.

It localises to the cytoplasm. The enzyme catalyses [E2 ubiquitin-conjugating enzyme]-S-ubiquitinyl-L-cysteine + [acceptor protein]-L-lysine = [E2 ubiquitin-conjugating enzyme]-L-cysteine + [acceptor protein]-N(6)-ubiquitinyl-L-lysine.. Its pathway is protein modification; protein ubiquitination. E3 ubiquitin-protein ligase, which catalyzes polyubiquitination of target proteins together with ubiquitin-conjugating enzyme E2 ube2l3. In Danio rerio (Zebrafish), this protein is E3 ubiquitin-protein ligase arih1l (arih1l).